Reading from the N-terminus, the 352-residue chain is Photosystem II D2 protein (352 aa).

Topologically, residues 1–31 (MTIAVGRAPVERGWFDVLDDWLKRDRFVFIG) are cytoplasmic. Residues 32–53 (WSGLLLFPCAFMALGGWLTGTT) form a helical membrane-spanning segment. Residues 54-108 (FVTSWYTHGLASSYLEGANFLTVAVSSPADAFGHSLLFLWGPEAQGNLTRWFQIG) are Lumenal, thylakoid-facing. A helical membrane pass occupies residues 109 to 131 (GLWPFVALHGAFGLIGFMLRQFE). Histidine 117 contributes to the chlorophyll a binding site. Glutamine 129 serves as a coordination point for pheophytin a. Residues 132–140 (ISRLVGIRP) lie on the Cytoplasmic side of the membrane. The chain crosses the membrane as a helical span at residues 141-162 (YNAIAFSGPIAVFVSVFLMYPL). Asparagine 142 lines the pheophytin a pocket. Over 163 to 190 (GQSSWFFAPSFGVAGIFRFILFLQGFHN) the chain is Lumenal, thylakoid. A helical transmembrane segment spans residues 191–217 (WTLNPFHMMGVAGILGGALLCAIHGAT). Histidine 197 is a binding site for chlorophyll a. The a plastoquinone site is built by histidine 214 and phenylalanine 261. Histidine 214 provides a ligand contact to Fe cation. At 218-265 (VENTLFEDGEDSNTFRAFEPTQAEETYSMVTANRFWSQIFGIAFSNKR) the chain is on the cytoplasmic side. A helical transmembrane segment spans residues 266-288 (WLHFFMLFVPVTGLWMSSVGIVG). A Fe cation-binding site is contributed by histidine 268. Residues 289 to 352 (LALNLRAYDF…EEVLPRGNAL (64 aa)) lie on the Lumenal, thylakoid side of the membrane.

It belongs to the reaction center PufL/M/PsbA/D family. PSII is composed of 1 copy each of membrane proteins PsbA, PsbB, PsbC, PsbD, PsbE, PsbF, PsbH, PsbI, PsbJ, PsbK, PsbL, PsbM, PsbT, PsbX, PsbY, PsbZ, Psb30/Ycf12, peripheral proteins PsbO, CyanoQ (PsbQ), PsbU, PsbV and a large number of cofactors. It forms dimeric complexes. The D1/D2 heterodimer binds P680, chlorophylls that are the primary electron donor of PSII, and subsequent electron acceptors. It shares a non-heme iron and each subunit binds pheophytin, quinone, additional chlorophylls, carotenoids and lipids. There is also a Cl(-1) ion associated with D1 and D2, which is required for oxygen evolution. The PSII complex binds additional chlorophylls, carotenoids and specific lipids. serves as cofactor.

The protein localises to the cellular thylakoid membrane. It catalyses the reaction 2 a plastoquinone + 4 hnu + 2 H2O = 2 a plastoquinol + O2. Its function is as follows. Photosystem II (PSII) is a light-driven water:plastoquinone oxidoreductase that uses light energy to abstract electrons from H(2)O, generating O(2) and a proton gradient subsequently used for ATP formation. It consists of a core antenna complex that captures photons, and an electron transfer chain that converts photonic excitation into a charge separation. The D1/D2 (PsbA/PsbD) reaction center heterodimer binds P680, the primary electron donor of PSII as well as several subsequent electron acceptors. D2 is needed for assembly of a stable PSII complex. This chain is Photosystem II D2 protein, found in Synechocystis sp. (strain ATCC 27184 / PCC 6803 / Kazusa).